The primary structure comprises 148 residues: Endoribonuclease YbeY (148 aa).

Zn(2+) contacts are provided by H113, H117, and H123.

The protein belongs to the endoribonuclease YbeY family. It depends on Zn(2+) as a cofactor.

The protein resides in the cytoplasm. In terms of biological role, single strand-specific metallo-endoribonuclease involved in late-stage 70S ribosome quality control and in maturation of the 3' terminus of the 16S rRNA. The sequence is that of Endoribonuclease YbeY from Borrelia duttonii (strain Ly).